A 112-amino-acid polypeptide reads, in one-letter code: Large ribosomal subunit protein mL53 (112 aa).

This sequence belongs to the mitochondrion-specific ribosomal protein mL53 family. As to quaternary structure, component of the mitochondrial large ribosomal subunit (mt-LSU). Mature mammalian 55S mitochondrial ribosomes consist of a small (28S) and a large (39S) subunit. The 28S small subunit contains a 12S ribosomal RNA (12S mt-rRNA) and 30 different proteins. The 39S large subunit contains a 16S rRNA (16S mt-rRNA), a copy of mitochondrial valine transfer RNA (mt-tRNA(Val)), which plays an integral structural role, and 52 different proteins. mL53 is located at the L7/L12 stalk.

It localises to the mitochondrion. This Homo sapiens (Human) protein is Large ribosomal subunit protein mL53 (MRPL53).